Here is a 289-residue protein sequence, read N- to C-terminus: Pyridoxal kinase PdxY (289 aa).

Substrate is bound by residues S9 and T44–Q45. ATP is bound by residues D112, V144, E149, and K182. D221 is a binding site for substrate.

This sequence belongs to the pyridoxine kinase family. PdxY subfamily. Homodimer. Mg(2+) serves as cofactor.

It catalyses the reaction pyridoxal + ATP = pyridoxal 5'-phosphate + ADP + H(+). The protein operates within cofactor metabolism; pyridoxal 5'-phosphate salvage; pyridoxal 5'-phosphate from pyridoxal: step 1/1. Pyridoxal kinase involved in the salvage pathway of pyridoxal 5'-phosphate (PLP). Catalyzes the phosphorylation of pyridoxal to PLP. This Vibrio parahaemolyticus serotype O3:K6 (strain RIMD 2210633) protein is Pyridoxal kinase PdxY.